We begin with the raw amino-acid sequence, 433 residues long: Serine carboxypeptidase-like 11 (433 aa).

The first 21 residues, 1-21 (MELTLKLLVLLLFILNHHVGS), serve as a signal peptide directing secretion. Disulfide bonds link C80-C322, C243-C257, and C281-C288. N-linked (GlcNAc...) asparagine glycosylation is present at N101. S176 is an active-site residue. N342 carries N-linked (GlcNAc...) asparagine glycosylation. Residue D358 is part of the active site. A glycan (N-linked (GlcNAc...) asparagine) is linked at N374. H411 is an active-site residue.

Belongs to the peptidase S10 family. As to expression, ubiquitous.

The protein resides in the secreted. Functionally, probable carboxypeptidase. This is Serine carboxypeptidase-like 11 (SCPL11) from Arabidopsis thaliana (Mouse-ear cress).